The chain runs to 289 residues: Oxaloacetate decarboxylase 1 (289 aa).

Serine 50 lines the substrate pocket. Residue aspartate 88 coordinates Mg(2+). Substrate is bound by residues arginine 159 and histidine 235.

This sequence belongs to the isocitrate lyase/PEP mutase superfamily. Oxaloacetate decarboxylase family. Homotetramer; dimer of dimers. The cofactor is Mg(2+).

It carries out the reaction oxaloacetate + H(+) = pyruvate + CO2. Catalyzes the decarboxylation of oxaloacetate into pyruvate. Seems to play a role in maintaining cellular concentrations of bicarbonate and pyruvate. This Pseudomonas fluorescens (strain Pf0-1) protein is Oxaloacetate decarboxylase 1.